A 442-amino-acid polypeptide reads, in one-letter code: tRNA-2-methylthio-N(6)-dimethylallyladenosine synthase (442 aa).

The MTTase N-terminal domain maps to 3-120 (NKLYIRTFGC…LPNMLNDALN (118 aa)). [4Fe-4S] cluster is bound by residues C12, C49, C83, C157, C161, and C164. A Radical SAM core domain is found at 143 to 375 (RTNSVTAFVS…QKTINNNTEH (233 aa)). Residues 378–440 (QLMIGSIQKV…GNSLMGDLLT (63 aa)) form the TRAM domain.

The protein belongs to the methylthiotransferase family. MiaB subfamily. In terms of assembly, monomer. [4Fe-4S] cluster is required as a cofactor.

The protein resides in the cytoplasm. It carries out the reaction N(6)-dimethylallyladenosine(37) in tRNA + (sulfur carrier)-SH + AH2 + 2 S-adenosyl-L-methionine = 2-methylsulfanyl-N(6)-dimethylallyladenosine(37) in tRNA + (sulfur carrier)-H + 5'-deoxyadenosine + L-methionine + A + S-adenosyl-L-homocysteine + 2 H(+). Its function is as follows. Catalyzes the methylthiolation of N6-(dimethylallyl)adenosine (i(6)A), leading to the formation of 2-methylthio-N6-(dimethylallyl)adenosine (ms(2)i(6)A) at position 37 in tRNAs that read codons beginning with uridine. This is tRNA-2-methylthio-N(6)-dimethylallyladenosine synthase from Vesicomyosocius okutanii subsp. Calyptogena okutanii (strain HA).